The following is a 139-amino-acid chain: Ribonuclease VapC39 (139 aa).

The region spanning 4 to 133 (LLDVNVLIAL…DAALADSASA (130 aa)) is the PINc domain. 2 residues coordinate Mg(2+): aspartate 6 and aspartate 106.

The protein belongs to the PINc/VapC protein family. Mg(2+) is required as a cofactor.

Its function is as follows. Toxic component of a type II toxin-antitoxin (TA) system. An RNase. Its toxic effect is neutralized by coexpression with cognate antitoxin VapB39. This chain is Ribonuclease VapC39, found in Mycobacterium tuberculosis (strain CDC 1551 / Oshkosh).